Consider the following 495-residue polypeptide: Glutamate--tRNA ligase 1 (495 aa).

A 'HIGH' region motif is present at residues 10–20 (PSPTGALHMGG). The short motif at 251–255 (KLSKR) is the 'KMSKS' region element. Lys-254 contributes to the ATP binding site.

The protein belongs to the class-I aminoacyl-tRNA synthetase family. Glutamate--tRNA ligase type 1 subfamily. As to quaternary structure, monomer.

The protein resides in the cytoplasm. The enzyme catalyses tRNA(Glu) + L-glutamate + ATP = L-glutamyl-tRNA(Glu) + AMP + diphosphate. In terms of biological role, catalyzes the attachment of glutamate to tRNA(Glu) in a two-step reaction: glutamate is first activated by ATP to form Glu-AMP and then transferred to the acceptor end of tRNA(Glu). This chain is Glutamate--tRNA ligase 1, found in Syntrophomonas wolfei subsp. wolfei (strain DSM 2245B / Goettingen).